Reading from the N-terminus, the 343-residue chain is Mitotic checkpoint protein bub-3 (343 aa).

WD repeat units lie at residues 21-62 (PPFV…DISE), 67-105 (THGKPLLTCTFAGYNKVAFGGVDHNVKLADIETGNGTQL), 107-146 (SHALAVRCMEFNPMSSLIVSGGWDSSVKLWDARSYGNGAI), 150-187 (NVSSSVYAMDVLKHTILVGTKDRKIFMYDSRKLREPLQ), 192-232 (PLKY…EMMK), 249-288 (ELIHPVHTVAFHPKYGTFATGGADGIVNIWDPFNRKRIIQ), and 291-331 (KFET…NSIT). Residues 322–343 (PSPLPNNSITIRHITDPESRPK) form a disordered region. Residues 334–343 (HITDPESRPK) are compositionally biased toward basic and acidic residues.

Belongs to the WD repeat BUB3 family. May interact with bub-1; for localization at the kinetochore and the onset of anaphase.

The protein localises to the chromosome. It is found in the centromere. Its subcellular location is the kinetochore. The protein resides in the nucleus. Functionally, has a dual function in spindle-assembly checkpoint signaling and in promoting the establishment of correct kinetochore-microtubule (K-MT) attachments. Promotes the formation of stable end-on bipolar attachments of chromosomes. Necessary for expression and kinetochore localization of bub-1. Plays a role in synapsis checkpoint signaling inducing apoptosis in response to unsynapsed chromosomes and thus controlling chromosomal segregation during oocyte meiosis. This chain is Mitotic checkpoint protein bub-3, found in Caenorhabditis elegans.